Consider the following 1102-residue polypeptide: Voltage-gated delayed rectifier potassium channel KCNH8 (1102 aa).

Topologically, residues 1-225 (MPVMKGLLAP…HFSTFKAGWD (225 aa)) are cytoplasmic. Residues 18–90 (IATRFDGTHS…LQIEKSLEEK (73 aa)) enclose the PAS domain. Residues 93 to 145 (FKGEIMFYKKNGAPFWCLLDIVPIKNEKGDVVLFLASFKDITDTKVKITSEDK) form the PAC domain. Positions 142–151 (SEDKKEDRTK) are enriched in basic and acidic residues. Residues 142–162 (SEDKKEDRTKGRSRAGSHFDS) are disordered. The helical transmembrane segment at 226–246 (WLILLATFYVAVTVPYNVCFI) threads the bilayer. Topologically, residues 247-255 (GNEDLSTTR) are extracellular. The helical transmembrane segment at 256–276 (STTVSDIAVEILFIIDIILNF) threads the bilayer. Over 277 to 298 (RTTYVSKSGQVIFEARSICIHY) the chain is Cytoplasmic. Residues 299 to 319 (VTTWFIIDLIAALPFDLLYAF) form a helical membrane-spanning segment. An N-linked (GlcNAc...) asparagine glycan is attached at N320. Residues 320–327 (NVTVVSLV) lie on the Extracellular side of the membrane. Residues 328–348 (HLLKTVRLLRLLRLLQKLDRY) traverse the membrane as a helical; Voltage-sensor segment. Over 349–357 (SQHSTIVLT) the chain is Cytoplasmic. The chain crosses the membrane as a helical span at residues 358-378 (LLMSMFALLAHWMACIWYVIG). Residues 379-419 (KMEREDNSLLKWEVGWLHELGKRLESPYYGNNTLGGPSIRS) are Extracellular-facing. N409 is a glycosylation site (N-linked (GlcNAc...) asparagine). An intramembrane region (pore-forming) is located at residues 420–440 (AYIAALYFTLSSLTSVGFGNV). The Selectivity filter motif lies at 434–439 (SVGFGN). The Extracellular segment spans residues 441–448 (SANTDAEK). The chain crosses the membrane as a helical span at residues 449–469 (IFSICTMLIGALMHALVFGNV). Residues 470 to 1102 (TAIIQRMYSR…DVKDSKAINV (633 aa)) lie on the Cytoplasmic side of the membrane. The cNMP-binding domain stretch occupies residues 551–668 (LFECASRGCL…HKFVEDIQHD (118 aa)). Positions 684–693 (RLSNKSTVSQ) are enriched in polar residues. 3 disordered regions span residues 684–743 (RLSN…KKTG), 764–841 (HSPI…PEPR), and 960–991 (LVGS…YSPS). Acidic residues predominate over residues 710–723 (VEDEEEEEVEEEET). The span at 724–737 (TSLSPIYTRGSSVS) shows a compositional bias: polar residues. Positions 968–984 (TEAHEQNPADSELHHSP) are enriched in basic and acidic residues.

The protein belongs to the potassium channel family. H (Eag) (TC 1.A.1.20) subfamily. Kv12.1/KCNH8 sub-subfamily. In terms of assembly, the potassium channel is probably composed of a homo- or heterotetrameric complex of pore-forming alpha subunits that can associate with modulating beta subunits.

The protein localises to the membrane. It catalyses the reaction K(+)(in) = K(+)(out). In terms of biological role, pore-forming (alpha) subunit of a voltage-gated delayed rectifier potassium channel that mediates outward-rectifying potassium currents. Elicits a slowly activating, non-inactivating and slowly deactivation outwards potassium current at depolarizating voltages from -30 mV to +50mV. Shows no obvious change in the activation rate from different holding potentials. Activation is strongly dependent on the pH of the external solution. The polypeptide is Voltage-gated delayed rectifier potassium channel KCNH8 (Mus musculus (Mouse)).